The sequence spans 1114 residues: WD repeat-containing protein 72 (1114 aa).

WD repeat units follow at residues 15–54 (APPHSITAIMITDDQQTIVTGSQEGQLCLWSLSPELKISA), 60–102 (GHSA…CVEK), 160–197 (KCMCIVHSVRIQEDSLLVVSITGELKVWDLSSSINSIQ), 327–373 (EENK…SKFD), 413–452 (GMTATITSSEYIPNLDKLICGCEDGTIFITKALNAAKAGL), 470–515 (GHHQ…ILHT), and 566–605 (KHLFPVRMIRWHPVENFLIVGCTDDSVYIWEIETGTLERH). 2 disordered regions span residues 634–658 (SETHKHKSIEQKSSNSHQPGPVPCP) and 749–798 (SLQT…PPRK). Basic residues predominate over residues 780–796 (KRQKKMKSSKKAHPKPP). 2 positions are modified to phosphoserine: S1093 and S1095.

As to expression, expressed in maturation stage ameloblasts (at protein level).

Its subcellular location is the cytoplasmic vesicle. Functionally, plays a major role in formation of tooth enamel. Specifically required during the maturation phase of amelogenesis for normal formation of the enamel matrix and clearance of enamel proteins. May be involved in localization of the calcium transporter SLC24A4 to the ameloblast cell membrane. The sequence is that of WD repeat-containing protein 72 from Mus musculus (Mouse).